A 222-amino-acid chain; its full sequence is Kunitz trypsin inhibitor 3 (222 aa).

A signal peptide spans Met-1–Ala-23. N-linked (GlcNAc...) asparagine glycosylation occurs at Asn-65. 2 cysteine pairs are disulfide-bonded: Cys-72/Cys-119 and Cys-165/Cys-173. A glycan (N-linked (GlcNAc...) asparagine) is linked at Asn-175.

Belongs to the protease inhibitor I3 (leguminous Kunitz-type inhibitor) family.

In terms of biological role, exhibits Kunitz trypsin protease inhibitor activity. This Arabidopsis thaliana (Mouse-ear cress) protein is Kunitz trypsin inhibitor 3.